The following is a 129-amino-acid chain: M-zodatoxin-Lt8j (129 aa).

A signal peptide spans 1-20 (MKYFVVALALVAAFACIAES). Positions 21–60 (KPAESEHELAEVEEENELADLEDAVWLEHLADLSDLEEAR) are excised as a propeptide.

It belongs to the cationic peptide 06 (cytoinsectotoxin) family. As to expression, expressed by the venom gland.

It is found in the secreted. In terms of biological role, insecticidal, cytolytic and antimicrobial peptide. Forms voltage-dependent, ion-permeable channels in membranes. At high concentration causes cell membrane lysis. This Lachesana tarabaevi (Spider) protein is M-zodatoxin-Lt8j (cit 1-9).